A 63-amino-acid polypeptide reads, in one-letter code: Large ribosomal subunit protein bL28 (63 aa).

The protein belongs to the bacterial ribosomal protein bL28 family.

This chain is Large ribosomal subunit protein bL28, found in Geobacter sulfurreducens (strain ATCC 51573 / DSM 12127 / PCA).